The sequence spans 292 residues: Cyclin-dependent kinase 5 (292 aa).

The Protein kinase domain occupies Tyr4 to Phe286. ATP is bound by residues Ile10–Val18 and Lys33. Tyr15 is modified (phosphotyrosine; by ABL1, EPHA4 and FYN). Position 17 is a phosphothreonine (Thr17). Lys56 bears the N6-acetyllysine mark. Position 72 is a phosphoserine (Ser72). Residue Asp126 is the Proton acceptor of the active site. A Phosphoserine modification is found at Ser159.

The protein belongs to the protein kinase superfamily. CMGC Ser/Thr protein kinase family. CDC2/CDKX subfamily. As to quaternary structure, heterodimer composed of a catalytic subunit CDK5 and a regulatory subunit CDK5R1 (p25) and macromolecular complex composed of at least CDK5, CDK5R1 (p35) and CDK5RAP1 or CDK5RAP2 or CDK5RAP3. Only the heterodimer shows kinase activity. Under neurotoxic stress and neuronal injury conditions, p35 is cleaved by calpain to generate p25 that hyperactivates CDK5, that becomes functionally disabled and often toxic. Found in a trimolecular complex with CABLES1 and ABL1. Interacts with CABLES1 and CABLES2. Interacts with AATK and GSTP1. Binds to HDAC1 when in complex with p25. Interaction with myristoylation p35 promotes CDK5 association with membranes. Both isoforms 1 and 2 interacts with beta-catenin/CTNNB1. Interacts with delta-catenin/CTNND2 and APEX1. Interacts with P53/TP53 in neurons. Interacts with EPHA4; may mediate the activation of NGEF by EPHA4. Interacts with PTK2/FAK1. The complex p35/CDK5 interacts with CLOCK. Phosphorylation on Tyr-15 by ABL1 and FYN, and on Ser-159 by casein kinase 1 promotes kinase activity. By contrast, phosphorylation at Thr-14 inhibits activity. In terms of processing, phosphorylation at Ser-159 is essential for maximal catalytic activity.

Its subcellular location is the nucleus. It localises to the cytoplasm. The protein resides in the cell membrane. The protein localises to the perikaryon. It is found in the cell projection. Its subcellular location is the lamellipodium. It localises to the growth cone. The protein resides in the postsynaptic density. The protein localises to the synapse. It carries out the reaction L-seryl-[protein] + ATP = O-phospho-L-seryl-[protein] + ADP + H(+). It catalyses the reaction L-threonyl-[protein] + ATP = O-phospho-L-threonyl-[protein] + ADP + H(+). Inhibited by 2-(1-ethyl-2-hydroxyethylamino)-6-benzylamino-9-isopropylpurine (roscovitine), 1-isopropyl-4-aminobenzyl-6-ether-linked benzimidazoles, resveratrol, AT-7519 and olomoucine. Activated by CDK5R1 (p35) and CDK5R2 (p39) during the development of the nervous system; degradation of CDK5R1 (p35) and CDK5R2 (p39) by proteasome result in down regulation of kinase activity, during this process, CDK5 phosphorylates p35 and induces its ubiquitination and subsequent degradation. Kinase activity is mainly determined by the amount of p35 available and subcellular location; reversible association to plasma membrane inhibits activity. Long-term inactivation as well as CDK5R1 (p25)-mediated hyperactivation of CDK5 triggers cell death. The pro-death activity of hyperactivated CDK5 is suppressed by membrane association of CDK5, via myristoylation of p35. Brain-derived neurotrophic factor, glial-derived neurotrophic factor, nerve growth factor (NGF), retinoic acid, laminin and neuregulin promote activity. Neurotoxicity enhances nuclear activity, thus leading to MEF2 phosphorylation and inhibition prior to apoptosis of cortical neurons. Repression by GSTP1 via p25/p35 translocation prevents neurodegeneration. Proline-directed serine/threonine-protein kinase essential for neuronal cell cycle arrest and differentiation and may be involved in apoptotic cell death in neuronal diseases by triggering abortive cell cycle re-entry. Interacts with D1 and D3-type G1 cyclins. Phosphorylates SRC, NOS3, VIM/vimentin, p35/CDK5R1, MEF2A, SIPA1L1, SH3GLB1, PXN, PAK1, MCAM/MUC18, SEPT5, SYN1, DNM1, AMPH, SYNJ1, CDK16, RAC1, RHOA, CDC42, TONEBP/NFAT5, MAPT/TAU, MAP1B, histone H1, p53/TP53, HDAC1, APEX1, PTK2/FAK1, huntingtin/HTT, ATM, MAP2, NEFH and NEFM. Regulates several neuronal development and physiological processes including neuronal survival, migration and differentiation, axonal and neurite growth, synaptogenesis, oligodendrocyte differentiation, synaptic plasticity and neurotransmission, by phosphorylating key proteins. Negatively regulates the CACNA1B/CAV2.2 -mediated Ca(2+) release probability at hippocampal neuronal soma and synaptic terminals. Activated by interaction with CDK5R1 (p35) and CDK5R2 (p39), especially in postmitotic neurons, and promotes CDK5R1 (p35) expression in an autostimulation loop. Phosphorylates many downstream substrates such as Rho and Ras family small GTPases (e.g. PAK1, RAC1, RHOA, CDC42) or microtubule-binding proteins (e.g. MAPT/TAU, MAP2, MAP1B), and modulates actin dynamics to regulate neurite growth and/or spine morphogenesis. Also phosphorylates exocytosis associated proteins such as MCAM/MUC18, SEPT5, SYN1, and CDK16/PCTAIRE1 as well as endocytosis associated proteins such as DNM1, AMPH and SYNJ1 at synaptic terminals. In the mature central nervous system (CNS), regulates neurotransmitter movements by phosphorylating substrates associated with neurotransmitter release and synapse plasticity; synaptic vesicle exocytosis, vesicles fusion with the presynaptic membrane, and endocytosis. Promotes cell survival by activating anti-apoptotic proteins BCL2 and STAT3, and negatively regulating of JNK3/MAPK10 activity. Phosphorylation of p53/TP53 in response to genotoxic and oxidative stresses enhances its stabilization by preventing ubiquitin ligase-mediated proteasomal degradation, and induces transactivation of p53/TP53 target genes, thus regulating apoptosis. Phosphorylation of p35/CDK5R1 enhances its stabilization by preventing calpain-mediated proteolysis producing p25/CDK5R1 and avoiding ubiquitin ligase-mediated proteasomal degradation. During aberrant cell-cycle activity and DNA damage, p25/CDK5 activity elicits cell-cycle activity and double-strand DNA breaks that precedes neuronal death by deregulating HDAC1. DNA damage triggered phosphorylation of huntingtin/HTT in nuclei of neurons protects neurons against polyglutamine expansion as well as DNA damage mediated toxicity. Phosphorylation of PXN reduces its interaction with PTK2/FAK1 in matrix-cell focal adhesions (MCFA) during oligodendrocytes (OLs) differentiation. Negative regulator of Wnt/beta-catenin signaling pathway. Activator of the GAIT (IFN-gamma-activated inhibitor of translation) pathway, which suppresses expression of a post-transcriptional regulon of proinflammatory genes in myeloid cells; phosphorylates the linker domain of glutamyl-prolyl tRNA synthetase (EPRS) in a IFN-gamma-dependent manner, the initial event in assembly of the GAIT complex. Phosphorylation of SH3GLB1 is required for autophagy induction in starved neurons. Phosphorylation of TONEBP/NFAT5 in response to osmotic stress mediates its rapid nuclear localization. MEF2 is inactivated by phosphorylation in nucleus in response to neurotoxin, thus leading to neuronal apoptosis. APEX1 AP-endodeoxyribonuclease is repressed by phosphorylation, resulting in accumulation of DNA damage and contributing to neuronal death. NOS3 phosphorylation down regulates NOS3-derived nitrite (NO) levels. SRC phosphorylation mediates its ubiquitin-dependent degradation and thus leads to cytoskeletal reorganization. May regulate endothelial cell migration and angiogenesis via the modulation of lamellipodia formation. Involved in dendritic spine morphogenesis by mediating the EFNA1-EPHA4 signaling. The complex p35/CDK5 participates in the regulation of the circadian clock by modulating the function of CLOCK protein: phosphorylates CLOCK at 'Thr-451' and 'Thr-461' and regulates the transcriptional activity of the CLOCK-BMAL1 heterodimer in association with altered stability and subcellular distribution. The sequence is that of Cyclin-dependent kinase 5 from Bos taurus (Bovine).